The primary structure comprises 218 residues: Small ribosomal subunit protein uS3 (218 aa).

The 69-residue stretch at 38-106 folds into the KH type-2 domain; that stretch reads IREYISKRLS…RVHINILEIK (69 aa).

Belongs to the universal ribosomal protein uS3 family. In terms of assembly, part of the 30S ribosomal subunit. Forms a tight complex with proteins S10 and S14.

Its function is as follows. Binds the lower part of the 30S subunit head. Binds mRNA in the 70S ribosome, positioning it for translation. This is Small ribosomal subunit protein uS3 from Bacillus subtilis (strain 168).